The sequence spans 211 residues: Uridine kinase (211 aa).

Residue 12-19 (GGSGSGKT) coordinates ATP.

This sequence belongs to the uridine kinase family.

The protein resides in the cytoplasm. The catalysed reaction is uridine + ATP = UMP + ADP + H(+). The enzyme catalyses cytidine + ATP = CMP + ADP + H(+). The protein operates within pyrimidine metabolism; CTP biosynthesis via salvage pathway; CTP from cytidine: step 1/3. It functions in the pathway pyrimidine metabolism; UMP biosynthesis via salvage pathway; UMP from uridine: step 1/1. The protein is Uridine kinase of Geobacillus sp. (strain WCH70).